Consider the following 592-residue polypeptide: Mitochondrial-type heat shock protein 70 (592 aa).

It belongs to the heat shock protein 70 family.

It is found in the nucleus. May act as a chaperone. The sequence is that of Mitochondrial-type heat shock protein 70 (HSP70) from Encephalitozoon cuniculi (strain GB-M1) (Microsporidian parasite).